We begin with the raw amino-acid sequence, 55 residues long: Small integral membrane protein 27 (55 aa).

Residues 11–31 (WIYSVLLLAIVLISWGCIIYA) traverse the membrane as a helical segment.

It localises to the membrane. The chain is Small integral membrane protein 27 from Homo sapiens (Human).